A 714-amino-acid chain; its full sequence is DNA ligase (714 aa).

NAD(+) is bound by residues 47–51 (DAAYD), 96–97 (SL), and Glu-130. Lys-132 functions as the N6-AMP-lysine intermediate in the catalytic mechanism. Residues Arg-153, Glu-190, Lys-306, and Lys-330 each coordinate NAD(+). Residues Cys-435, Cys-438, Cys-453, and Cys-459 each coordinate Zn(2+). The region spanning 636–714 (RNDSAVAGKT…EDEWLKLIEG (79 aa)) is the BRCT domain.

Belongs to the NAD-dependent DNA ligase family. LigA subfamily. Mg(2+) serves as cofactor. Requires Mn(2+) as cofactor.

The enzyme catalyses NAD(+) + (deoxyribonucleotide)n-3'-hydroxyl + 5'-phospho-(deoxyribonucleotide)m = (deoxyribonucleotide)n+m + AMP + beta-nicotinamide D-nucleotide.. DNA ligase that catalyzes the formation of phosphodiester linkages between 5'-phosphoryl and 3'-hydroxyl groups in double-stranded DNA using NAD as a coenzyme and as the energy source for the reaction. It is essential for DNA replication and repair of damaged DNA. The polypeptide is DNA ligase (Nitrobacter hamburgensis (strain DSM 10229 / NCIMB 13809 / X14)).